A 689-amino-acid chain; its full sequence is DNA ligase (689 aa).

NAD(+) is bound by residues 51–55 (DSEYD), 100–101 (SL), and Glu129. Residue Lys131 is the N6-AMP-lysine intermediate of the active site. Residues Arg152, Glu189, Lys308, and Lys332 each coordinate NAD(+). Zn(2+) contacts are provided by Cys426, Cys429, Cys444, and Cys450. Residues 609-689 (ADEQPLKGQT…ELLALLAANR (81 aa)) enclose the BRCT domain.

The protein belongs to the NAD-dependent DNA ligase family. LigA subfamily. The cofactor is Mg(2+). Mn(2+) serves as cofactor.

It catalyses the reaction NAD(+) + (deoxyribonucleotide)n-3'-hydroxyl + 5'-phospho-(deoxyribonucleotide)m = (deoxyribonucleotide)n+m + AMP + beta-nicotinamide D-nucleotide.. In terms of biological role, DNA ligase that catalyzes the formation of phosphodiester linkages between 5'-phosphoryl and 3'-hydroxyl groups in double-stranded DNA using NAD as a coenzyme and as the energy source for the reaction. It is essential for DNA replication and repair of damaged DNA. The sequence is that of DNA ligase from Shewanella oneidensis (strain ATCC 700550 / JCM 31522 / CIP 106686 / LMG 19005 / NCIMB 14063 / MR-1).